Consider the following 493-residue polypeptide: Cobyric acid synthase (493 aa).

One can recognise a GATase cobBQ-type domain in the interval 246-440 (PIDIAVIKMP…IHGVFDGVSF (195 aa)). Cysteine 326 functions as the Nucleophile in the catalytic mechanism. Histidine 432 is a catalytic residue.

Belongs to the CobB/CobQ family. CobQ subfamily.

It participates in cofactor biosynthesis; adenosylcobalamin biosynthesis. Catalyzes amidations at positions B, D, E, and G on adenosylcobyrinic A,C-diamide. NH(2) groups are provided by glutamine, and one molecule of ATP is hydrogenolyzed for each amidation. This is Cobyric acid synthase from Clostridium botulinum (strain Langeland / NCTC 10281 / Type F).